The following is a 248-amino-acid chain: ATP synthase subunit a (248 aa).

The next 5 membrane-spanning stretches (helical) occupy residues glycine 31–glycine 51, valine 90–phenylalanine 110, isoleucine 129–serine 149, valine 195–phenylalanine 215, and leucine 216–glutamate 236.

This sequence belongs to the ATPase A chain family. In terms of assembly, F-type ATPases have 2 components, CF(1) - the catalytic core - and CF(0) - the membrane proton channel. CF(1) has five subunits: alpha(3), beta(3), gamma(1), delta(1), epsilon(1). CF(0) has four main subunits: a, b, b' and c.

It localises to the cellular thylakoid membrane. Its function is as follows. Key component of the proton channel; it plays a direct role in the translocation of protons across the membrane. This is ATP synthase subunit a from Synechococcus sp. (strain JA-2-3B'a(2-13)) (Cyanobacteria bacterium Yellowstone B-Prime).